A 116-amino-acid chain; its full sequence is Prefoldin subunit beta (116 aa).

This sequence belongs to the prefoldin subunit beta family. Heterohexamer of two alpha and four beta subunits.

Its subcellular location is the cytoplasm. Molecular chaperone capable of stabilizing a range of proteins. Seems to fulfill an ATP-independent, HSP70-like function in archaeal de novo protein folding. The chain is Prefoldin subunit beta from Methanobrevibacter smithii (strain ATCC 35061 / DSM 861 / OCM 144 / PS).